The sequence spans 1021 residues: Immunoglobulin superfamily member 2 (1021 aa).

The first 20 residues, M1 to G20, serve as a signal peptide directing secretion. Residues Q21–P954 lie on the Extracellular side of the membrane. 7 Ig-like C2-type domains span residues R22 to N139, P144 to I265, P279 to S389, P408 to S525, L541 to Y651, P656 to L794, and P808 to N925. 2 disulfides stabilise this stretch: C43–C121 and C168–C249. N-linked (GlcNAc...) asparagine glycosylation is present at N44. An EWI motif motif is present at residues E253–I255. Intrachain disulfides connect C304/C377, C434/C511, C562/C640, C697/C778, and C834/C909. A glycan (N-linked (GlcNAc...) asparagine) is linked at N322. The helical transmembrane segment at L955 to L975 threads the bilayer. Residues C976–N1021 lie on the Cytoplasmic side of the membrane.

In terms of processing, N-glycosylated. Expressed in lung, thymus and small intestine. Detected in cutaneous dendritic cells, activated T-cells, monocytes and granulocytes as well as with epithelial cells with dendritic morphology. Expressed in some leukemic cells, the CD4(+) CD56(+) blastic tumor cells, as well as in Langerhans cells from LCH (Langerhans cell histiocytosis) patients.

The protein resides in the membrane. In terms of biological role, plays a role as inhibitor of T-cells proliferation induced by CD3. Inhibits expression of IL2RA on activated T-cells and secretion of IL2. Inhibits tyrosine kinases that are required for IL2 production and cellular proliferation. Inhibits phospholipase C-gamma-1/PLCG1 phosphorylation and subsequent CD3-induced changes in intracellular free calcium. Prevents nuclear translocation of nuclear factor of activated T-cell to the nucleus. Plays a role in the inhibition of T-cell proliferation via IL10 secretion by cutaneous dendritic cells. May be a marker of CD4(+) CD56(+) leukemic tumor cells. This is Immunoglobulin superfamily member 2 (CD101) from Homo sapiens (Human).